We begin with the raw amino-acid sequence, 68 residues long: MKAGMKLVLVLVIASIALLALATEVAGDCIPQGASCNRLSTIPRRCCFPMVCGWDSSTCVPATINVKP.

Residues 1–22 (MKAGMKLVLVLVIASIALLALA) form the signal peptide. 3 cysteine pairs are disulfide-bonded: cysteine 29-cysteine 47, cysteine 36-cysteine 52, and cysteine 46-cysteine 59.

Belongs to the venom Ptu1-like knottin family. Expressed by the venom gland.

It localises to the secreted. Functionally, binds reversibly and blocks P/Q-type voltage-gated calcium channels (Cav). The chain is U-reduvitoxin-Pr3a from Platymeris rhadamanthus (Red spot assassin bug).